A 167-amino-acid polypeptide reads, in one-letter code: MGINLSNGDWNRYKKEGFLITKFGDLIDYIMNWARSGSLWPMTFGLACCAVEMMHTASSRYDLDRYGIIFRASPRQADVMIVAGTLTNKMAAALRKVYDQMADPKYVVSMGSCANGGGYYHYSYSVVRGCDRIVPVDVYVPGCPPTAEALLYGMLCLQNKIKRTKNI.

[4Fe-4S] cluster is bound by residues cysteine 48, cysteine 49, cysteine 113, and cysteine 143.

This sequence belongs to the complex I 20 kDa subunit family. As to quaternary structure, NDH-1 is composed of 14 different subunits. Subunits NuoB, C, D, E, F, and G constitute the peripheral sector of the complex. [4Fe-4S] cluster is required as a cofactor.

It is found in the cell membrane. The catalysed reaction is a quinone + NADH + 5 H(+)(in) = a quinol + NAD(+) + 4 H(+)(out). NDH-1 shuttles electrons from NADH, via FMN and iron-sulfur (Fe-S) centers, to quinones in the respiratory chain. Couples the redox reaction to proton translocation (for every two electrons transferred, four hydrogen ions are translocated across the cytoplasmic membrane), and thus conserves the redox energy in a proton gradient. The chain is NADH-quinone oxidoreductase subunit B from Wolbachia pipientis subsp. Culex pipiens (strain wPip).